Reading from the N-terminus, the 331-residue chain is D-alanine--D-alanine ligase (331 aa).

The ATP-grasp domain occupies 116–316 (KRLWQTHSLP…YEDFVLQLAA (201 aa)). 142–197 (ADRLGLPLIVKPAREGSSIGLTKVTSVAELPAAYEKAARLDRDVMAEQFIDGDELT) is a binding site for ATP. Mg(2+)-binding residues include D269, E283, and N285.

It belongs to the D-alanine--D-alanine ligase family. Mg(2+) serves as cofactor. The cofactor is Mn(2+).

It is found in the cytoplasm. The catalysed reaction is 2 D-alanine + ATP = D-alanyl-D-alanine + ADP + phosphate + H(+). The protein operates within cell wall biogenesis; peptidoglycan biosynthesis. Functionally, cell wall formation. This Ralstonia nicotianae (strain ATCC BAA-1114 / GMI1000) (Ralstonia solanacearum) protein is D-alanine--D-alanine ligase.